The sequence spans 161 residues: DNA-directed RNA polymerase 19 kDa subunit (161 aa).

Residues 1-32 are compositionally biased toward acidic residues; it reads MADTDDIIDYESDDLTEYEDDEEDGESLETSD. Positions 1 to 35 are disordered; sequence MADTDDIIDYESDDLTEYEDDEEDGESLETSDIDP.

This sequence belongs to the poxviridae DNA-directed RNA polymerase 19 kDa subunit family. As to quaternary structure, the DNA-dependent RNA polymerase used for intermediate and late genes expression consists of eight subunits Rpo30/OPG66, Rpo7/OPG90, Rpo22/OPG103, Rpo147/OPG105, Rpo18/OPG119, Rpo19/OPG131, Rpo132/OPG151 and Rpo35/OPG156. The same holoenzyme, with the addition of the transcription-specificity factor OPG109, is used for early gene expression.

It is found in the virion. It catalyses the reaction RNA(n) + a ribonucleoside 5'-triphosphate = RNA(n+1) + diphosphate. Part of the DNA-dependent RNA polymerase which catalyzes the transcription of viral DNA into RNA using the four ribonucleoside triphosphates as substrates. Responsible for the transcription of early, intermediate and late genes. DNA-dependent RNA polymerase associates with the early transcription factor (ETF), itself composed of OPG118 and OPG133, thereby allowing the early genes transcription. Late transcription, and probably also intermediate transcription, require newly synthesized RNA polymerase. The polypeptide is DNA-directed RNA polymerase 19 kDa subunit (OPG131) (Monkeypox virus).